A 364-amino-acid chain; its full sequence is Anhydro-N-acetylmuramic acid kinase (364 aa).

11 to 18 (GSSLDGID) contacts ATP.

It belongs to the anhydro-N-acetylmuramic acid kinase family.

It catalyses the reaction 1,6-anhydro-N-acetyl-beta-muramate + ATP + H2O = N-acetyl-D-muramate 6-phosphate + ADP + H(+). The protein operates within amino-sugar metabolism; 1,6-anhydro-N-acetylmuramate degradation. It functions in the pathway cell wall biogenesis; peptidoglycan recycling. Functionally, catalyzes the specific phosphorylation of 1,6-anhydro-N-acetylmuramic acid (anhMurNAc) with the simultaneous cleavage of the 1,6-anhydro ring, generating MurNAc-6-P. Is required for the utilization of anhMurNAc either imported from the medium or derived from its own cell wall murein, and thus plays a role in cell wall recycling. This is Anhydro-N-acetylmuramic acid kinase from Pseudomonas syringae pv. tomato (strain ATCC BAA-871 / DC3000).